Consider the following 354-residue polypeptide: Uroporphyrinogen decarboxylase (354 aa).

Residues 27-31 (RQAGR), Asp-77, Tyr-154, Thr-209, and His-327 each bind substrate.

This sequence belongs to the uroporphyrinogen decarboxylase family. Homodimer.

Its subcellular location is the cytoplasm. The catalysed reaction is uroporphyrinogen III + 4 H(+) = coproporphyrinogen III + 4 CO2. It functions in the pathway porphyrin-containing compound metabolism; protoporphyrin-IX biosynthesis; coproporphyrinogen-III from 5-aminolevulinate: step 4/4. Functionally, catalyzes the decarboxylation of four acetate groups of uroporphyrinogen-III to yield coproporphyrinogen-III. The sequence is that of Uroporphyrinogen decarboxylase from Escherichia fergusonii (strain ATCC 35469 / DSM 13698 / CCUG 18766 / IAM 14443 / JCM 21226 / LMG 7866 / NBRC 102419 / NCTC 12128 / CDC 0568-73).